The sequence spans 403 residues: Golgin-45 (403 aa).

A disordered region spans residues 1-63; sequence MEKMTTLKSS…PRKKVSSDSP (63 aa). A Tankyrase-binding motif motif is present at residues 22 to 26; the sequence is RGAGD. Position 53 is a phosphoserine (Ser-53). The stretch at 123–216 forms a coiled coil; that stretch reads RKELSEVKKV…QLERMSIQCD (94 aa). The residue at position 356 (Ser-356) is a Phosphoserine. An essential for interaction with GORASP2 region spans residues 397-403; sequence QGELIAL.

Interacts with GORASP2. Interacts with the GTP-bound form of RAB2, but not with other Golgi Rab proteins. Identified in a complex with RAB2 and GORASP2. ADP-ribosylated by tankyrase TNKS and TNKS2. Poly-ADP-ribosylated protein is recognized by RNF146, followed by ubiquitination. Post-translationally, ubiquitinated by RNF146 when poly-ADP-ribosylated, leading to its degradation.

The protein resides in the golgi apparatus membrane. Its function is as follows. Required for normal Golgi structure and for protein transport from the endoplasmic reticulum (ER) through the Golgi apparatus to the cell surface. This chain is Golgin-45 (Blzf1), found in Mus musculus (Mouse).